Reading from the N-terminus, the 129-residue chain is Small ribosomal subunit protein uS11 (129 aa).

The protein belongs to the universal ribosomal protein uS11 family. As to quaternary structure, part of the 30S ribosomal subunit. Interacts with proteins S7 and S18. Binds to IF-3.

Functionally, located on the platform of the 30S subunit, it bridges several disparate RNA helices of the 16S rRNA. Forms part of the Shine-Dalgarno cleft in the 70S ribosome. In Oleidesulfovibrio alaskensis (strain ATCC BAA-1058 / DSM 17464 / G20) (Desulfovibrio alaskensis), this protein is Small ribosomal subunit protein uS11.